A 506-amino-acid polypeptide reads, in one-letter code: Ribose import ATP-binding protein RbsA (506 aa).

2 consecutive ABC transporter domains span residues Leu5 to Arg241 and Arg254 to Val498. Gly37–Ser44 contributes to the ATP binding site.

It belongs to the ABC transporter superfamily. Ribose importer (TC 3.A.1.2.1) family. In terms of assembly, the complex is composed of an ATP-binding protein (RbsA), two transmembrane proteins (RbsC) and a solute-binding protein (RbsB).

It is found in the cell inner membrane. It carries out the reaction D-ribose(out) + ATP + H2O = D-ribose(in) + ADP + phosphate + H(+). Its function is as follows. Part of the ABC transporter complex RbsABC involved in ribose import. Responsible for energy coupling to the transport system. This Burkholderia mallei (strain ATCC 23344) protein is Ribose import ATP-binding protein RbsA.